Here is a 271-residue protein sequence, read N- to C-terminus: 3-methyl-2-oxobutanoate hydroxymethyltransferase (271 aa).

Mg(2+) contacts are provided by Asp-53 and Asp-92. Residues Asp-53 to Ser-54, Asp-92, and Lys-120 each bind 3-methyl-2-oxobutanoate. Mg(2+) is bound at residue Glu-122. The active-site Proton acceptor is Glu-189.

Belongs to the PanB family. In terms of assembly, homodecamer; pentamer of dimers. The cofactor is Mg(2+).

It localises to the cytoplasm. The catalysed reaction is 3-methyl-2-oxobutanoate + (6R)-5,10-methylene-5,6,7,8-tetrahydrofolate + H2O = 2-dehydropantoate + (6S)-5,6,7,8-tetrahydrofolate. It participates in cofactor biosynthesis; (R)-pantothenate biosynthesis; (R)-pantoate from 3-methyl-2-oxobutanoate: step 1/2. In terms of biological role, catalyzes the reversible reaction in which hydroxymethyl group from 5,10-methylenetetrahydrofolate is transferred onto alpha-ketoisovalerate to form ketopantoate. The protein is 3-methyl-2-oxobutanoate hydroxymethyltransferase of Paraburkholderia phytofirmans (strain DSM 17436 / LMG 22146 / PsJN) (Burkholderia phytofirmans).